Consider the following 286-residue polypeptide: Polyamine aminopropyltransferase (286 aa).

The PABS domain occupies 5–238 (TMWHETLHDQ…GIMTFAWATN (234 aa)). An S-methyl-5'-thioadenosine-binding site is contributed by Q33. Spermidine-binding residues include H64 and D88. S-methyl-5'-thioadenosine contacts are provided by residues E108 and 140–141 (DG). Catalysis depends on D158, which acts as the Proton acceptor. 158 to 161 (DCTD) is a spermidine binding site. Residue P165 participates in S-methyl-5'-thioadenosine binding.

Belongs to the spermidine/spermine synthase family. As to quaternary structure, homodimer or homotetramer.

It localises to the cytoplasm. It carries out the reaction S-adenosyl 3-(methylsulfanyl)propylamine + putrescine = S-methyl-5'-thioadenosine + spermidine + H(+). It functions in the pathway amine and polyamine biosynthesis; spermidine biosynthesis; spermidine from putrescine: step 1/1. Functionally, catalyzes the irreversible transfer of a propylamine group from the amino donor S-adenosylmethioninamine (decarboxy-AdoMet) to putrescine (1,4-diaminobutane) to yield spermidine. This chain is Polyamine aminopropyltransferase, found in Salmonella paratyphi B (strain ATCC BAA-1250 / SPB7).